A 457-amino-acid polypeptide reads, in one-letter code: Glutamate--tRNA ligase 2 (457 aa).

A 'HIGH' region motif is present at residues Pro-9 to Asn-19. A 'KMSKS' region motif is present at residues Gly-250–Arg-254. Lys-253 contacts ATP.

This sequence belongs to the class-I aminoacyl-tRNA synthetase family. Glutamate--tRNA ligase type 1 subfamily. Monomer.

It is found in the cytoplasm. The catalysed reaction is tRNA(Glu) + L-glutamate + ATP = L-glutamyl-tRNA(Glu) + AMP + diphosphate. Catalyzes the attachment of glutamate to tRNA(Glu) in a two-step reaction: glutamate is first activated by ATP to form Glu-AMP and then transferred to the acceptor end of tRNA(Glu). The polypeptide is Glutamate--tRNA ligase 2 (Brucella melitensis biotype 1 (strain ATCC 23456 / CCUG 17765 / NCTC 10094 / 16M)).